The primary structure comprises 107 residues: Essential MCU regulator, mitochondrial (107 aa).

The N-terminal 47 residues, 1-47, are a transit peptide targeting the mitochondrion; sequence MASTAARRLAWVAVRPGALWSGPRGRRGGDVYTVPGSSGLSQVPSRS. Residues 48–65 are Mitochondrial matrix-facing; that stretch reads VIVTRSGAILPKPVKMSF. The chain crosses the membrane as a helical span at residues 66 to 85; it reads GLLRVFSIVIPFLYVGTLIS. Positions 81–85 match the GXXXX[G/A/S] motif; the sequence is GTLIS. Topologically, residues 86 to 107 are mitochondrial intermembrane; sequence KNFAALLEEHDIFVPEDDDDDD.

This sequence belongs to the SMDT1/EMRE family. As to quaternary structure, component of the uniplex complex, composed of MCU, EMRE/SMDT1, MICU1 and MICU2 (or MICU3) in a 4:4:1:1 stoichiometry. The number of EMRE/SMDT1 molecules is hovewer variable, ranging from 1 to 4 copies per uniplex complex, leading to uniplex complexes with distinct gatekeeping profiles. Interacts (via its C-terminal poly-Asp tail) with MCUR1; the interaction is direct. Unprocessed form interacts (via transit peptide) with MAIP1. Post-translationally, undergoes proteolytic degradation in neurons: degraded by AFG3L2 and SPG7 before SMDT1/EMRE assembly with the uniporter complex, limiting the availability of SMDT1/EMRE for MCU assembly and promoting efficient assembly of gatekeeper subunits with MCU. Widely expressed.

Its subcellular location is the mitochondrion inner membrane. Its function is as follows. Essential regulatory subunit of the mitochondrial calcium uniporter complex (uniplex), a complex that mediates calcium uptake into mitochondria. Required to bridge the calcium-sensing proteins MICU1 with the calcium-conducting subunit MCU. Acts by mediating activation of MCU and retention of MICU1 to the MCU pore, in order to ensure tight regulation of the uniplex complex and appropriate responses to intracellular calcium signaling. This Mus musculus (Mouse) protein is Essential MCU regulator, mitochondrial.